A 150-amino-acid polypeptide reads, in one-letter code: Ribonuclease pancreatic delta-type (150 aa).

A signal peptide spans 1–25; it reads MGLEKSFILFSLLVLVLGWVQPSLG. A substrate-binding site is contributed by Arg35. Residue His37 is the Proton acceptor of the active site. 4 disulfides stabilise this stretch: Cys51-Cys110, Cys65-Cys121, Cys83-Cys136, and Cys90-Cys98. Residues 66–70, Lys91, and Arg111 contribute to the substrate site; that span reads KRVNT. Residue His145 is the Proton donor of the active site.

This sequence belongs to the pancreatic ribonuclease family. Monomer.

The protein resides in the secreted. It carries out the reaction an [RNA] containing cytidine + H2O = an [RNA]-3'-cytidine-3'-phosphate + a 5'-hydroxy-ribonucleotide-3'-[RNA].. It catalyses the reaction an [RNA] containing uridine + H2O = an [RNA]-3'-uridine-3'-phosphate + a 5'-hydroxy-ribonucleotide-3'-[RNA].. Its function is as follows. Endonuclease that catalyzes the cleavage of RNA on the 3' side of pyrimidine nucleotides. Acts on single-stranded and double-stranded RNA. In Rattus norvegicus (Rat), this protein is Ribonuclease pancreatic delta-type (Rnase1d).